The chain runs to 240 residues: 3-deoxy-D-manno-octulosonic acid kinase (240 aa).

Residue aspartate 170 is part of the active site.

Belongs to the protein kinase superfamily. KdkA/RfaP family.

It is found in the cell inner membrane. The enzyme catalyses an alpha-Kdo-(2-&gt;6)-lipid IVA + ATP = a 4-O-phospho-alpha-Kdo-(2-&gt;6)-lipid IVA + ADP + H(+). Its pathway is bacterial outer membrane biogenesis; LPS core biosynthesis. Functionally, catalyzes the ATP-dependent phosphorylation of the 3-deoxy-D-manno-octulosonic acid (Kdo) residue in Kdo-lipid IV(A) at the 4-OH position. The polypeptide is 3-deoxy-D-manno-octulosonic acid kinase (Mannheimia succiniciproducens (strain KCTC 0769BP / MBEL55E)).